A 1003-amino-acid polypeptide reads, in one-letter code: Serine/threonine-protein kinase spk-1 (1003 aa).

Disordered stretches follow at residues Asn-92–Glu-112, Asn-169–Ser-309, and Arg-337–Gly-408. Positions Ser-202–Asp-211 are enriched in acidic residues. Residues Ser-248 to Lys-265 show a composition bias toward basic and acidic residues. Residues Thr-285–Gly-300 are compositionally biased toward low complexity. A compositionally biased stretch (basic and acidic residues) spans Lys-346 to Asp-359. In terms of domain architecture, Protein kinase spans Tyr-422 to Leu-904. ATP is bound by residues Leu-428–Val-436 and Lys-451. Residue Asp-555 is the Proton acceptor of the active site. Positions Asp-927–Gln-1003 are disordered. Residues Gly-936–Ser-953 show a composition bias toward basic and acidic residues. Residues Glu-954–Gly-964 are compositionally biased toward low complexity. Residues Val-983–Ile-992 show a composition bias toward polar residues. Residues Asp-994–Gln-1003 show a composition bias toward basic and acidic residues.

Belongs to the protein kinase superfamily. Ser/Thr protein kinase family. Interacts with rsp-3. In terms of tissue distribution, predominantly coexpressed with rsp-3 in adult hermaphrodite germlines.

The catalysed reaction is L-seryl-[protein] + ATP = O-phospho-L-seryl-[protein] + ADP + H(+). It carries out the reaction L-threonyl-[protein] + ATP = O-phospho-L-threonyl-[protein] + ADP + H(+). Its function is as follows. Required for embryogenesis and germline development in both adult hermaphrodites and males. SR-protein kinase (SRPK) that binds directly to and phosphorylates the RS domain of rsp-3/CeSF2 in vitro. The sequence is that of Serine/threonine-protein kinase spk-1 (spk-1) from Caenorhabditis elegans.